The primary structure comprises 293 residues: Ribosomal protein L11 methyltransferase (293 aa).

Residues T145, G166, D188, and N230 each contribute to the S-adenosyl-L-methionine site.

This sequence belongs to the methyltransferase superfamily. PrmA family.

Its subcellular location is the cytoplasm. It catalyses the reaction L-lysyl-[protein] + 3 S-adenosyl-L-methionine = N(6),N(6),N(6)-trimethyl-L-lysyl-[protein] + 3 S-adenosyl-L-homocysteine + 3 H(+). In terms of biological role, methylates ribosomal protein L11. This Shewanella woodyi (strain ATCC 51908 / MS32) protein is Ribosomal protein L11 methyltransferase.